The following is a 930-amino-acid chain: Isoleucine--tRNA ligase (930 aa).

Residues 57 to 67 (PYANGHLHLGH) carry the 'HIGH' region motif. An L-isoleucyl-5'-AMP-binding site is contributed by glutamate 555. The short motif at 596–600 (KMSKS) is the 'KMSKS' region element. Lysine 599 contributes to the ATP binding site. Residues cysteine 896, cysteine 899, cysteine 916, and cysteine 919 each contribute to the Zn(2+) site.

This sequence belongs to the class-I aminoacyl-tRNA synthetase family. IleS type 1 subfamily. In terms of assembly, monomer. Zn(2+) serves as cofactor.

The protein resides in the cytoplasm. The enzyme catalyses tRNA(Ile) + L-isoleucine + ATP = L-isoleucyl-tRNA(Ile) + AMP + diphosphate. Catalyzes the attachment of isoleucine to tRNA(Ile). As IleRS can inadvertently accommodate and process structurally similar amino acids such as valine, to avoid such errors it has two additional distinct tRNA(Ile)-dependent editing activities. One activity is designated as 'pretransfer' editing and involves the hydrolysis of activated Val-AMP. The other activity is designated 'posttransfer' editing and involves deacylation of mischarged Val-tRNA(Ile). This Moorella thermoacetica (strain ATCC 39073 / JCM 9320) protein is Isoleucine--tRNA ligase.